Consider the following 131-residue polypeptide: Protein GLUTAMINE DUMPER 5 (131 aa).

Over 1–34 (MRQFPSIRGNINEKMMTTMVESQTRSPWRTPVPY) the chain is Extracellular. Residues 35–55 (LFGGLAAMLGLIAFALLLLAC) traverse the membrane as a helical segment. The Cytoplasmic segment spans residues 56-131 (SYWRLSRQTE…GESKVTEENH (76 aa)). The VIMAG motif lies at 88–92 (VIMAG).

Belongs to the GLUTAMINE DUMPER 1 (TC 9.B.60) family. In terms of tissue distribution, expressed in the vascular tissues. Also detected in guard cells.

It is found in the membrane. In terms of biological role, probable subunit of an amino acid transporter involved in the regulation of the amino acid metabolism. Stimulates amino acid export by activating nonselective amino acid facilitators. This Arabidopsis thaliana (Mouse-ear cress) protein is Protein GLUTAMINE DUMPER 5 (GDU5).